Reading from the N-terminus, the 219-residue chain is Probable GTP-binding protein EngB (219 aa).

Residues 31–205 (VGVEIAFAGR…LSILNEWCHP (175 aa)) enclose the EngB-type G domain. GTP contacts are provided by residues 39–46 (GRSNAGKS), 66–70 (GRTQL), 84–87 (DLPG), 151–154 (TKSD), and 184–186 (FSA). Residues serine 46 and threonine 68 each contribute to the Mg(2+) site.

This sequence belongs to the TRAFAC class TrmE-Era-EngA-EngB-Septin-like GTPase superfamily. EngB GTPase family. Requires Mg(2+) as cofactor.

Necessary for normal cell division and for the maintenance of normal septation. In Shewanella sp. (strain ANA-3), this protein is Probable GTP-binding protein EngB.